The following is a 234-amino-acid chain: Large ribosomal subunit protein uL1 (234 aa).

This sequence belongs to the universal ribosomal protein uL1 family. In terms of assembly, part of the 50S ribosomal subunit.

Binds directly to 23S rRNA. The L1 stalk is quite mobile in the ribosome, and is involved in E site tRNA release. Functionally, protein L1 is also a translational repressor protein, it controls the translation of the L11 operon by binding to its mRNA. The sequence is that of Large ribosomal subunit protein uL1 from Escherichia coli (strain 55989 / EAEC).